A 237-amino-acid chain; its full sequence is Phosphoribosylaminoimidazole-succinocarboxamide synthase (237 aa).

It belongs to the SAICAR synthetase family.

It carries out the reaction 5-amino-1-(5-phospho-D-ribosyl)imidazole-4-carboxylate + L-aspartate + ATP = (2S)-2-[5-amino-1-(5-phospho-beta-D-ribosyl)imidazole-4-carboxamido]succinate + ADP + phosphate + 2 H(+). It functions in the pathway purine metabolism; IMP biosynthesis via de novo pathway; 5-amino-1-(5-phospho-D-ribosyl)imidazole-4-carboxamide from 5-amino-1-(5-phospho-D-ribosyl)imidazole-4-carboxylate: step 1/2. The sequence is that of Phosphoribosylaminoimidazole-succinocarboxamide synthase from Oceanobacillus iheyensis (strain DSM 14371 / CIP 107618 / JCM 11309 / KCTC 3954 / HTE831).